Consider the following 271-residue polypeptide: uncharacterized protein (271 aa).

The disordered stretch occupies residues 1–20 (MPDLHTLPAGSRPERAIRNN).

The protein belongs to the PEP2 family.

This is an uncharacterized protein from Aspergillus terreus (strain NIH 2624 / FGSC A1156).